The chain runs to 338 residues: MGTDIGDLLLKDTIEIAGLSNKVVAIDAYNTLYQFLSIIRQRDGTPLKDSRGQITSHLSGILYRLTSLIEAGVKPIFVFDGKPPDFKSDTLAKRHEVRESATAKWEDAKAQGLEEEAYKYAQASSKVTREMIDDSVRLLELMGIPYVKAPSEGEAQASYMVQKGDADYIGSQDYDSFLFGAPQVVRNLTITGKRKLPKKNIYVDVKPEVLSLVDSLGELGITRQQLIDIAMCVGTDYNTGLENIGPKRALKLVKEHGDIKVVLKELGKDIEDLDAKRDFFMNPPVTDDYELKWIKPDRAGVIDLLCKKHDFSEERVNKALDRLEANIGGSQSTLDQWF.

The segment at 1–98 is N-domain; the sequence is MGTDIGDLLL…DTLAKRHEVR (98 aa). Positions 27, 80, 152, 154, 173, 175, and 236 each coordinate Mg(2+). Residues 116 to 257 form an I-domain region; sequence EAYKYAQASS…RALKLVKEHG (142 aa). Residues 330 to 338 are interaction with PCNA; that stretch reads SQSTLDQWF.

Belongs to the XPG/RAD2 endonuclease family. FEN1 subfamily. Interacts with PCNA. PCNA stimulates the nuclease activity without altering cleavage specificity. The cofactor is Mg(2+).

Structure-specific nuclease with 5'-flap endonuclease and 5'-3' exonuclease activities involved in DNA replication and repair. During DNA replication, cleaves the 5'-overhanging flap structure that is generated by displacement synthesis when DNA polymerase encounters the 5'-end of a downstream Okazaki fragment. Binds the unpaired 3'-DNA end and kinks the DNA to facilitate 5' cleavage specificity. Cleaves one nucleotide into the double-stranded DNA from the junction in flap DNA, leaving a nick for ligation. Also involved in the base excision repair (BER) pathway. Acts as a genome stabilization factor that prevents flaps from equilibrating into structures that lead to duplications and deletions. Also possesses 5'-3' exonuclease activity on nicked or gapped double-stranded DNA. The polypeptide is Flap endonuclease 1 (Methanococcoides burtonii (strain DSM 6242 / NBRC 107633 / OCM 468 / ACE-M)).